A 605-amino-acid chain; its full sequence is UvrABC system protein C (605 aa).

In terms of domain architecture, GIY-YIG spans 14-92 (QSCGVYKMVG…IKSLKPLYNI (79 aa)). The UVR domain maps to 202–237 (KEVKEQLLFTMRKCSSEENYELAAIYRDRVKFLEQI).

Belongs to the UvrC family. Interacts with UvrB in an incision complex.

The protein resides in the cytoplasm. Its function is as follows. The UvrABC repair system catalyzes the recognition and processing of DNA lesions. UvrC both incises the 5' and 3' sides of the lesion. The N-terminal half is responsible for the 3' incision and the C-terminal half is responsible for the 5' incision. The sequence is that of UvrABC system protein C from Wolbachia sp. subsp. Drosophila simulans (strain wRi).